We begin with the raw amino-acid sequence, 313 residues long: Ribosomal RNA small subunit methyltransferase H (313 aa).

S-adenosyl-L-methionine contacts are provided by residues 35 to 37 (GGH), Asp55, Phe79, Asp101, and Gln108.

Belongs to the methyltransferase superfamily. RsmH family.

It is found in the cytoplasm. It catalyses the reaction cytidine(1402) in 16S rRNA + S-adenosyl-L-methionine = N(4)-methylcytidine(1402) in 16S rRNA + S-adenosyl-L-homocysteine + H(+). In terms of biological role, specifically methylates the N4 position of cytidine in position 1402 (C1402) of 16S rRNA. The chain is Ribosomal RNA small subunit methyltransferase H from Edwardsiella ictaluri (strain 93-146).